Reading from the N-terminus, the 339-residue chain is DNA repair protein RAD51 homolog 1 (339 aa).

The disordered stretch occupies residues 1 to 23 (MAMQVQFEASTDTSAEEESFGPE). One can recognise a HhH domain in the interval 48 to 77 (TVESVAHAPKKELLNIKGISEAKADKILAE). 127 to 134 (GEFRTGKT) lines the ATP pocket.

The protein belongs to the RecA family. RAD51 subfamily. Forms linear homooligomers, giving rise to a RAD51 nucleoprotein filament, which is essential for strand-pairing reactions during DNA recombination. Expressed at high levels in lymphoid and reproductive organs.

It localises to the nucleus. The protein resides in the cytoplasm. It is found in the chromosome. Functionally, plays an important role in homologous strand exchange, a key step in DNA repair through homologous recombination (HR). Binds to single-stranded DNA in an ATP-dependent manner to form nucleoprotein filaments which are essential for the homology search and strand exchange. Catalyzes the recognition of homology and strand exchange between homologous DNA partners to form a joint molecule between a processed DNA break and the repair template. Recruited to resolve stalled replication forks during replication stress. Also involved in interstrand cross-link repair. The protein is DNA repair protein RAD51 homolog 1 (RAD51A) of Gallus gallus (Chicken).